The sequence spans 63 residues: MSYSGSYYGGLGYGCGGFGGLGYGYSCGCGSFRRLGYGCGYGGYRYSCCHPSCYGGYWSSGFY.

Belongs to the KRTAP type 19 family. As to quaternary structure, interacts with hair keratins.

Functionally, in the hair cortex, hair keratin intermediate filaments are embedded in an interfilamentous matrix, consisting of hair keratin-associated proteins (KRTAP), which are essential for the formation of a rigid and resistant hair shaft through their extensive disulfide bond cross-linking with abundant cysteine residues of hair keratins. The matrix proteins include the high-sulfur and high-glycine-tyrosine keratins. This Homo sapiens (Human) protein is Keratin-associated protein 19-7 (KRTAP19-7).